The primary structure comprises 476 residues: Aspartyl/glutamyl-tRNA(Asn/Gln) amidotransferase subunit B (476 aa).

The protein belongs to the GatB/GatE family. GatB subfamily. As to quaternary structure, heterotrimer of A, B and C subunits.

It carries out the reaction L-glutamyl-tRNA(Gln) + L-glutamine + ATP + H2O = L-glutaminyl-tRNA(Gln) + L-glutamate + ADP + phosphate + H(+). The catalysed reaction is L-aspartyl-tRNA(Asn) + L-glutamine + ATP + H2O = L-asparaginyl-tRNA(Asn) + L-glutamate + ADP + phosphate + 2 H(+). Functionally, allows the formation of correctly charged Asn-tRNA(Asn) or Gln-tRNA(Gln) through the transamidation of misacylated Asp-tRNA(Asn) or Glu-tRNA(Gln) in organisms which lack either or both of asparaginyl-tRNA or glutaminyl-tRNA synthetases. The reaction takes place in the presence of glutamine and ATP through an activated phospho-Asp-tRNA(Asn) or phospho-Glu-tRNA(Gln). This is Aspartyl/glutamyl-tRNA(Asn/Gln) amidotransferase subunit B from Clostridium botulinum (strain Okra / Type B1).